Reading from the N-terminus, the 397-residue chain is MKETWRWFGESDPITLEHVRQTGASGVVTALHQIPDGTAWPAEEIAKRKAMIEAAGLEWSVCESIPMEQSIKRGDADAPKAIARWKDTLSRLGRAGVPVVCYNFMPVVDWTRTNLRWQARNTGLALRFEMADFVAYDVFILKRIRAAENYDPALVARAEERFAQMSEDEQSLLERNIIAGLPGGALVQTRQSIAALIASFDGIDSATMQGNLLAFLKEVVPVAEEVGVHLGIHPDDPPFSLFGLPRVVSTPADIRAILSAVESPNNGITLCTGSYGARSDNDLVAMAKEFASRVNFAHLRNVTVEADGSFFEDDHLDGGADMIGVIEALLREERSTAKAGRRTNIPMRPDHGHLLGDDITKKTNPGYSYIGRMKGLGELRGVIRTIERQLRREEAAA.

The protein belongs to the mannonate dehydratase family. Requires Fe(2+) as cofactor. It depends on Mn(2+) as a cofactor.

It catalyses the reaction D-mannonate = 2-dehydro-3-deoxy-D-gluconate + H2O. It functions in the pathway carbohydrate metabolism; pentose and glucuronate interconversion. In terms of biological role, catalyzes the dehydration of D-mannonate. This Agrobacterium fabrum (strain C58 / ATCC 33970) (Agrobacterium tumefaciens (strain C58)) protein is Mannonate dehydratase 2 (uxuA2).